Here is a 173-residue protein sequence, read N- to C-terminus: Large ribosomal subunit protein uL10 (173 aa).

The protein belongs to the universal ribosomal protein uL10 family. In terms of assembly, part of the ribosomal stalk of the 50S ribosomal subunit. The N-terminus interacts with L11 and the large rRNA to form the base of the stalk. The C-terminus forms an elongated spine to which L12 dimers bind in a sequential fashion forming a multimeric L10(L12)X complex.

In terms of biological role, forms part of the ribosomal stalk, playing a central role in the interaction of the ribosome with GTP-bound translation factors. The sequence is that of Large ribosomal subunit protein uL10 from Acidithiobacillus ferrooxidans (strain ATCC 23270 / DSM 14882 / CIP 104768 / NCIMB 8455) (Ferrobacillus ferrooxidans (strain ATCC 23270)).